A 374-amino-acid chain; its full sequence is Phospho-N-acetylmuramoyl-pentapeptide-transferase (374 aa).

Transmembrane regions (helical) follow at residues 3 to 23, 52 to 72, 85 to 105, 125 to 145, 170 to 190, 201 to 221, 244 to 264, 271 to 291, 294 to 314, and 350 to 370; these read AVIVAVGVAFLVSLFCTPIAI, MGGVVFILATVIAYVAGHLAL, PTITALVLLGLMVFSGAVGFI, LLGQILVGAVFGVIALYFPST, IPALELTKVGAVVLFIFVVMA, LDGLATGASVMVLAAYALIAF, PLEIALIAGAAAGACVGFLWW, IFMGDTGALGLGGLIAGMAMS, TILLLPIIGGLFVIITMSVVI, and FWIIAGIGVAIALGLFYSEFL.

This sequence belongs to the glycosyltransferase 4 family. MraY subfamily. Mg(2+) is required as a cofactor.

It is found in the cell membrane. It carries out the reaction UDP-N-acetyl-alpha-D-muramoyl-L-alanyl-gamma-D-glutamyl-meso-2,6-diaminopimeloyl-D-alanyl-D-alanine + di-trans,octa-cis-undecaprenyl phosphate = di-trans,octa-cis-undecaprenyl diphospho-N-acetyl-alpha-D-muramoyl-L-alanyl-D-glutamyl-meso-2,6-diaminopimeloyl-D-alanyl-D-alanine + UMP. The protein operates within cell wall biogenesis; peptidoglycan biosynthesis. Catalyzes the initial step of the lipid cycle reactions in the biosynthesis of the cell wall peptidoglycan: transfers peptidoglycan precursor phospho-MurNAc-pentapeptide from UDP-MurNAc-pentapeptide onto the lipid carrier undecaprenyl phosphate, yielding undecaprenyl-pyrophosphoryl-MurNAc-pentapeptide, known as lipid I. This Salinispora arenicola (strain CNS-205) protein is Phospho-N-acetylmuramoyl-pentapeptide-transferase.